A 534-amino-acid polypeptide reads, in one-letter code: CTP synthase (534 aa).

Residues 1–267 form an amidoligase domain region; the sequence is MTKYIFVTGG…DQIVCDHLKL (267 aa). Ser13 lines the CTP pocket. Residue Ser13 participates in UTP binding. ATP is bound at residue 14-19; the sequence is SIGKGI. Tyr54 lines the L-glutamine pocket. Position 71 (Asp71) interacts with ATP. Mg(2+) contacts are provided by Asp71 and Glu141. Residues 148 to 150, 188 to 193, and Lys224 contribute to the CTP site; these read DIE and KTKPTQ. UTP-binding positions include 188–193 and Lys224; that span reads KTKPTQ. Residues 292 to 534 enclose the Glutamine amidotransferase type-1 domain; that stretch reads KIALVGKYVE…FVTAAVENAK (243 aa). Gly354 contacts L-glutamine. The active-site Nucleophile; for glutamine hydrolysis is the Cys381. L-glutamine contacts are provided by residues 382-385, Glu405, and Arg463; that span reads LGMQ. Active-site residues include His508 and Glu510.

It belongs to the CTP synthase family. In terms of assembly, homotetramer.

It catalyses the reaction UTP + L-glutamine + ATP + H2O = CTP + L-glutamate + ADP + phosphate + 2 H(+). The enzyme catalyses L-glutamine + H2O = L-glutamate + NH4(+). The catalysed reaction is UTP + NH4(+) + ATP = CTP + ADP + phosphate + 2 H(+). It participates in pyrimidine metabolism; CTP biosynthesis via de novo pathway; CTP from UDP: step 2/2. With respect to regulation, allosterically activated by GTP, when glutamine is the substrate; GTP has no effect on the reaction when ammonia is the substrate. The allosteric effector GTP functions by stabilizing the protein conformation that binds the tetrahedral intermediate(s) formed during glutamine hydrolysis. Inhibited by the product CTP, via allosteric rather than competitive inhibition. Functionally, catalyzes the ATP-dependent amination of UTP to CTP with either L-glutamine or ammonia as the source of nitrogen. Regulates intracellular CTP levels through interactions with the four ribonucleotide triphosphates. In Streptococcus thermophilus (strain CNRZ 1066), this protein is CTP synthase.